Reading from the N-terminus, the 429-residue chain is MAHALKRILYATWYPDILVNYTHSVNCRRTLDVMSETNNEFLAALESAADQIKVGDVVTGELLAIDNDNQAVVGLSTGEEGVVPAREYSDDRNINLADELKIGDTIEAVVISNVTSDKEGVAYLLSKKRLDARKAWENLSFAEGDTVDAKVINAVRGGLIVDVNGVRGFVPASMVAERFVSDLNQFKNKDIKAQVIEIDPANARLILSRKAVAAQELAAQLAEVFSKLSVGEVVEGTVARLTDFGAFVDLGGVDGLVHVSEISHDRVKNPADVLTKGDKVDVKILALDTEKGRISLSIKATQRGPWDEAADQIAAGSVLEGTVKRVKDFGAFVEILPGIEGLVHVSQISNKRIENPSEVLKSGDKVQVKVLDIKPAEERISLSMKALEEKPEREDRRGNDGSASRADIAAYKQQDDSAATLGDIFGDKL.

S1 motif domains lie at 55–128, 144–211, 231–299, and 316–385; these read GDVV…LSKK, GDTV…SRKA, GEVV…LSIK, and GSVL…LSMK. A compositionally biased stretch (basic and acidic residues) spans 382–399; the sequence is LSMKALEEKPEREDRRGN. Residues 382 to 412 are disordered; that stretch reads LSMKALEEKPEREDRRGNDGSASRADIAAYK.

The protein belongs to the bacterial ribosomal protein bS1 family.

Binds mRNA; thus facilitating recognition of the initiation point. It is needed to translate mRNA with a short Shine-Dalgarno (SD) purine-rich sequence. The polypeptide is Small ribosomal subunit protein bS1 (rps1) (Leuconostoc lactis).